Reading from the N-terminus, the 1050-residue chain is MARNDWINSYLEAILDVGTSKKKRFESNSKIVQKLGDINSKDHQEKVFGDMNGKDHQEKVFSPIKYFVEEVVNSFDESDLYKTWIKVIATRNTRERSNRLENICWRIWHLARKKKQIVWDDGVRLSKRRIEREQGRNDAEEDLLSELSEGEKDKNDGEKEKSEVVTTLEPPRDHMPRIRSEMQIWSEDDKSSRNLYIVLISMHGLVRGENMELGRDSDTGGQVKYVVELARALANTEGVHRVDLLTRQISSPEVDYSYGEPVEMLSCPPEGSDSCGSYIIRIPCGSRDKYIPKESLWPHIPEFVDGALNHIVSIARSLGEQVNGGKPIWPYVIHGHYADAGEVAAHLAGALNVPMVLTGHSLGRNKFEQLLQQGRITREDIDRTYKIMRRIEAEEQSLDAAEMVVTSTRQEIDAQWGLYDGFDIKLERKLRVRRRRGVSCLGRYMPRMVVIPPGMDFSYVLTQDSQEPDGDLKSLIGPDRNQIKKPVPPIWSEIMRFFSNPHKPTILALSRPDHKKNVTTLVKAFGECQPLRELANLVLILGNRDDIEEMPNSSSVVLMNVLKLIDQYDLYGQVAYPKHHKQSEVPDIYRLAAKTKGVFINPALVEPFGLTLIEAAAYGLPIVATRNGGPVDIVKALNNGLLVDPHDQQAISDALLKLVANKHLWAECRKNGLKNIHRFSWPEHCRNYLSHVEHCRNRHPTSSLDIMKVPEELTSDSLRDVDDISLRFSTEGDFTLNGELDAGTRQKKLVDAISQMNSMKGCSAAIYSPGRRQMLFVVAVDSYDDNGNIKANLNEIIKNMIKAADLTSGKGKIGFVLASGSSLQEVVDITQKNLINLEDFDAIVCNSGSEIYYPWRDMMVDADYETHVEYKWPGESIRSVILRLICTEPAAEDDITEYASSCSTRCYAISVKQGVKTRRVDDLRQRLRMRGLRCNIVYTHAATRLNVIPLCASRIQALRYLSIRWGIDMSKTVFFLGEKGDTDYEDLLGGLHKTIILKGVVGSDSEKLLRSEENFKREDAVPQESPNISYVKENGGSQEIMSTLEAYGIK.

The disordered stretch occupies residues 134–167; the sequence is QGRNDAEEDLLSELSEGEKDKNDGEKEKSEVVTT. Residue Ser-148 is modified to Phosphoserine. A compositionally biased stretch (basic and acidic residues) spans 149–163; it reads EGEKDKNDGEKEKSE. Ser-180 bears the Phosphoserine mark.

This sequence belongs to the glycosyltransferase 1 family. Homodimer or homotetramer.

It carries out the reaction beta-D-fructose 6-phosphate + UDP-alpha-D-glucose = sucrose 6(F)-phosphate + UDP + H(+). It participates in glycan biosynthesis; sucrose biosynthesis; sucrose from D-fructose 6-phosphate and UDP-alpha-D-glucose: step 1/2. With respect to regulation, activity is regulated by phosphorylation and moderated by concentration of metabolites and light. Plays a role in photosynthetic sucrose synthesis by catalyzing the rate-limiting step of sucrose biosynthesis from UDP-glucose and fructose- 6-phosphate. Involved in the regulation of carbon partitioning in the leaves of plants. May regulate the synthesis of sucrose and therefore play a major role as a limiting factor in the export of photoassimilates out of the leaf. Plays a role for sucrose availability that is essential for plant growth and fiber elongation. In Arabidopsis thaliana (Mouse-ear cress), this protein is Sucrose-phosphate synthase 4.